Here is a 230-residue protein sequence, read N- to C-terminus: Orotidine 5'-phosphate decarboxylase (230 aa).

Substrate contacts are provided by residues Asp-12, Lys-34, Asp-61–Thr-70, Thr-116, Arg-177, Gln-186, and Arg-207. Lys-63 acts as the Proton donor in catalysis.

Belongs to the OMP decarboxylase family. Type 1 subfamily. Homodimer.

It catalyses the reaction orotidine 5'-phosphate + H(+) = UMP + CO2. It functions in the pathway pyrimidine metabolism; UMP biosynthesis via de novo pathway; UMP from orotate: step 2/2. Its function is as follows. Catalyzes the decarboxylation of orotidine 5'-monophosphate (OMP) to uridine 5'-monophosphate (UMP). The polypeptide is Orotidine 5'-phosphate decarboxylase (Rhizobium rhizogenes (strain K84 / ATCC BAA-868) (Agrobacterium radiobacter)).